The chain runs to 361 residues: DNA replication and repair protein RecF (361 aa).

30 to 37 (GDNAQGKT) is an ATP binding site.

Belongs to the RecF family.

It is found in the cytoplasm. In terms of biological role, the RecF protein is involved in DNA metabolism; it is required for DNA replication and normal SOS inducibility. RecF binds preferentially to single-stranded, linear DNA. It also seems to bind ATP. The protein is DNA replication and repair protein RecF of Clostridium botulinum (strain Eklund 17B / Type B).